Consider the following 865-residue polypeptide: Leucine-rich repeat-containing protein 66 (865 aa).

Residues 4 to 24 (FYARVTVMVTGLCFVGTVTNP) traverse the membrane as a helical segment. The N-linked (GlcNAc...) asparagine glycan is linked to N42. LRR repeat units lie at residues 138–160 (RLKV…WKLK), 161–182 (PLCS…GFHG), 185–206 (QLKS…AFKG), 209–230 (KLQV…VTIA), and 235–255 (NLEL…ANFQ). N248 is a glycosylation site (N-linked (GlcNAc...) asparagine). A helical membrane pass occupies residues 366 to 386 (ALAVCLSVFITFVVAFCLGAF). Disordered regions lie at residues 463–522 (RMLG…PGQH) and 654–749 (DTPS…AESV). Positions 470–479 (MDPSSQQSPG) are enriched in polar residues. Basic and acidic residues predominate over residues 675–688 (AVQRDASFDPHDDL). The segment covering 702–713 (FTLSSEGSQDTR) has biased composition (polar residues). A phosphoserine mark is found at S714 and S748. The region spanning 728–759 (SQPLPSRNLGEYKDSVTSAESVEDITSQQTLE) is the LRRNT domain. The N-linked (GlcNAc...) asparagine glycan is linked to N787. The tract at residues 840–865 (FPNIDSSPSPPCSDQDPSDPEEHDTK) is disordered. Over residues 855-865 (DPSDPEEHDTK) the composition is skewed to acidic residues.

The protein resides in the membrane. The sequence is that of Leucine-rich repeat-containing protein 66 (Lrrc66) from Rattus norvegicus (Rat).